The sequence spans 213 residues: Probable nicotinate-nucleotide adenylyltransferase (213 aa).

The protein belongs to the NadD family.

The catalysed reaction is nicotinate beta-D-ribonucleotide + ATP + H(+) = deamido-NAD(+) + diphosphate. It functions in the pathway cofactor biosynthesis; NAD(+) biosynthesis; deamido-NAD(+) from nicotinate D-ribonucleotide: step 1/1. Functionally, catalyzes the reversible adenylation of nicotinate mononucleotide (NaMN) to nicotinic acid adenine dinucleotide (NaAD). This chain is Probable nicotinate-nucleotide adenylyltransferase, found in Trichlorobacter lovleyi (strain ATCC BAA-1151 / DSM 17278 / SZ) (Geobacter lovleyi).